The following is a 509-amino-acid chain: Steroid 17-alpha-hydroxylase/17,20 lyase (509 aa).

Asparagine 202 serves as a coordination point for substrate. Heme is bound at residue cysteine 442.

This sequence belongs to the cytochrome P450 family. Heme serves as cofactor.

It is found in the endoplasmic reticulum membrane. It localises to the microsome membrane. It carries out the reaction a C21-steroid + reduced [NADPH--hemoprotein reductase] + O2 = a 17alpha-hydroxy-C21-steroid + oxidized [NADPH--hemoprotein reductase] + H2O + H(+). It catalyses the reaction progesterone + reduced [NADPH--hemoprotein reductase] + O2 = 17alpha-hydroxyprogesterone + oxidized [NADPH--hemoprotein reductase] + H2O + H(+). The enzyme catalyses pregnenolone + reduced [NADPH--hemoprotein reductase] + O2 = 17alpha-hydroxypregnenolone + oxidized [NADPH--hemoprotein reductase] + H2O + H(+). The catalysed reaction is 17alpha-hydroxyprogesterone + reduced [NADPH--hemoprotein reductase] + O2 = androst-4-ene-3,17-dione + acetate + oxidized [NADPH--hemoprotein reductase] + H2O + 2 H(+). It carries out the reaction 17alpha-hydroxyprogesterone + reduced [NADPH--hemoprotein reductase] + O2 = 16alpha,17alpha-dihydroxyprogesterone + oxidized [NADPH--hemoprotein reductase] + H2O + H(+). It catalyses the reaction 16alpha,17alpha-dihydroxyprogesterone + reduced [NADPH--hemoprotein reductase] + O2 = 6beta,16alpha,17alpha-trihydroxyprogesterone + oxidized [NADPH--hemoprotein reductase] + H2O + H(+). The enzyme catalyses 17alpha-hydroxypregnenolone + reduced [NADPH--hemoprotein reductase] + O2 = 3beta-hydroxyandrost-5-en-17-one + acetate + oxidized [NADPH--hemoprotein reductase] + H2O + 2 H(+). The catalysed reaction is 16alpha,17alpha-dihydroxypregnenolone + reduced [NADPH--hemoprotein reductase] + O2 = 3beta,16alpha-dihydroxy-androst-5-en-17-one + acetate + oxidized [NADPH--hemoprotein reductase] + H2O + 2 H(+). It carries out the reaction 3beta-hydroxyandrost-5-en-17-one + reduced [NADPH--hemoprotein reductase] + O2 = 3beta,16alpha-dihydroxy-androst-5-en-17-one + oxidized [NADPH--hemoprotein reductase] + H2O + H(+). It catalyses the reaction androst-4-ene-3,17-dione + reduced [NADPH--hemoprotein reductase] + O2 = 16alpha-hydroxyandrost-4-ene-3,17-dione + oxidized [NADPH--hemoprotein reductase] + H2O + H(+). The protein operates within steroid hormone biosynthesis. It functions in the pathway steroid biosynthesis; glucocorticoid biosynthesis. Its activity is regulated as follows. Regulated predominantly by intracellular cAMP levels. The 17,20-lyase activity is stimulated by cytochrome b5, which acts as an allosteric effector increasing the Vmax of the lyase activity. A cytochrome P450 monooxygenase involved in corticoid and androgen biosynthesis. Catalyzes 17-alpha hydroxylation of C21 steroids, which is common for both pathways. A second oxidative step, required only for androgen synthesis, involves an acyl-carbon cleavage. The 17-alpha hydroxy intermediates, as part of adrenal glucocorticoids biosynthesis pathway, are precursors of cortisol. Hydroxylates steroid hormones, pregnenolone and progesterone to form 17-alpha hydroxy metabolites, followed by the cleavage of the C17-C20 bond to form C19 steroids, dehydroepiandrosterone (DHEA) and androstenedione. Has 16-alpha hydroxylase activity. Catalyzes 16-alpha hydroxylation of 17-alpha hydroxy pregnenolone, followed by the cleavage of the C17-C20 bond to form 16-alpha-hydroxy DHEA. Also 16-alpha hydroxylates androgens, relevant for estriol synthesis. Mechanistically, uses molecular oxygen inserting one oxygen atom into a substrate, and reducing the second into a water molecule, with two electrons provided by NADPH via cytochrome P450 reductase (CPR; NADPH-ferrihemoprotein reductase). The sequence is that of Steroid 17-alpha-hydroxylase/17,20 lyase (CYP17A1) from Ovis aries (Sheep).